Consider the following 532-residue polypeptide: Nitrogenase molybdenum-iron protein alpha chain (532 aa).

Cysteine 62, cysteine 88, and cysteine 153 together coordinate [8Fe-7S] cluster. Residues cysteine 271 and histidine 489 each coordinate [7Fe-Mo-9S-C-homocitryl] cluster.

The protein belongs to the NifD/NifK/NifE/NifN family. As to quaternary structure, tetramer of two alpha and two beta chains. Forms complex with the iron protein (nitrogenase component 2). [8Fe-7S] cluster serves as cofactor. The cofactor is [7Fe-Mo-9S-C-homocitryl] cluster.

The catalysed reaction is N2 + 8 reduced [2Fe-2S]-[ferredoxin] + 16 ATP + 16 H2O = H2 + 8 oxidized [2Fe-2S]-[ferredoxin] + 2 NH4(+) + 16 ADP + 16 phosphate + 6 H(+). This molybdenum-iron protein is part of the nitrogenase complex that catalyzes the key enzymatic reactions in nitrogen fixation. The chain is Nitrogenase molybdenum-iron protein alpha chain (nifD2) from Methanosarcina barkeri.